We begin with the raw amino-acid sequence, 73 residues long: MAKPLGTTGEFFRRRDEWRKHPMLSNQMRHALPGLGIGVAAFCVYLVGEQIYNKALAPSKSSHHHQEQTAPSH.

Residues 31–48 (ALPGLGIGVAAFCVYLVG) traverse the membrane as a helical segment.

This sequence belongs to the complex I NDUFB3 subunit family. In terms of assembly, complex I is composed of at least 49 different subunits.

The protein resides in the mitochondrion inner membrane. Functionally, accessory subunit of the mitochondrial membrane respiratory chain NADH dehydrogenase (Complex I), that is believed not to be involved in catalysis. Complex I functions in the transfer of electrons from NADH to the respiratory chain. The immediate electron acceptor for the enzyme is believed to be ubiquinone. In Arabidopsis thaliana (Mouse-ear cress), this protein is NADH dehydrogenase [ubiquinone] 1 beta subcomplex subunit 3-B.